The sequence spans 334 residues: BTB and MATH domain-containing protein 39 (334 aa).

The region spanning 14–141 (IVTLVFNIYN…EGRFQIEFDL (128 aa)) is the MATH domain. Positions 164–229 (ADGELITDGK…LQLDSFEVSV (66 aa)) constitute a BTB domain.

In Caenorhabditis elegans, this protein is BTB and MATH domain-containing protein 39 (bath-39).